Here is a 359-residue protein sequence, read N- to C-terminus: MVDVANIHLPVLLDDCVNLMAPALEHENAVAVDCTLGLAGHSIAFLKTAPQARLIGIDRDSEALGLAAERMEREGLADRFIPVHAAFDQLDQVLTDRGIERVDAVFMDLGLSSLQIDETDRGFSYSHDAPLDMRMDVSQPLTAERILATYDAAELVRIFKEYGEERFSRQIARAIVAHRDKEPFTTTAQLNRLVDEVVPQAHRPAGNPAKRVFQALRIEVNGELDKLASTLPQAANRLHVGGRLVVESYHSLEDKTVKSFMAQGLRVDVPAGLPVIPPDAQPFFTDLTRGAIKADEHEIAANPRSASVRLRAVEVSRDIPSRWRKRFTQTAQGLNDINIQGSASPGRAKNTARIRTRRG.

S-adenosyl-L-methionine is bound by residues Ala39–His41, Asp58, Phe87, Asp108, and Gln115. The disordered stretch occupies residues Ile339–Gly359. A compositionally biased stretch (basic residues) spans Asn350–Gly359.

Belongs to the methyltransferase superfamily. RsmH family.

The protein resides in the cytoplasm. It carries out the reaction cytidine(1402) in 16S rRNA + S-adenosyl-L-methionine = N(4)-methylcytidine(1402) in 16S rRNA + S-adenosyl-L-homocysteine + H(+). Its function is as follows. Specifically methylates the N4 position of cytidine in position 1402 (C1402) of 16S rRNA. The sequence is that of Ribosomal RNA small subunit methyltransferase H from Bifidobacterium longum subsp. infantis (strain ATCC 15697 / DSM 20088 / JCM 1222 / NCTC 11817 / S12).